The sequence spans 575 residues: Sclareol synthase, chloroplastic (575 aa).

The transit peptide at Met1–Met51 directs the protein to the chloroplast. Asp329, Asp333, Asn473, Ser477, and Glu481 together coordinate Mg(2+). Residues Asp329–Asp333 carry the DDXXD motif motif.

This sequence belongs to the terpene synthase family.

The protein resides in the plastid. It is found in the chloroplast. The enzyme catalyses 8-hydroxycopalyl diphosphate + H2O = sclareol + diphosphate. It participates in secondary metabolite biosynthesis; terpenoid biosynthesis. In terms of biological role, involved in the biosynthesis of labdane-type diterpenoid including sclareol, a diterpene-diol that is used as fragrance and flavoring, and has anticancer effects (able to kill leukemic and colon cancer cells by apoptosis). Sclareol can also be used as synthesis precursor of ambergris substitution fragance products such as ambrox. Terpene synthase that catalyzes the conversion of 8-hydroxy-copalyl diphosphate to sclareol. This is Sclareol synthase, chloroplastic from Salvia sclarea (Clary sage).